The following is a 605-amino-acid chain: Elongation factor 4 (605 aa).

Residues 9 to 192 enclose the tr-type G domain; sequence HHIRNFCIIA…AIVKRVPAPS (184 aa). GTP contacts are provided by residues 21 to 26 and 139 to 142; these read DHGKST and NKID.

It belongs to the TRAFAC class translation factor GTPase superfamily. Classic translation factor GTPase family. LepA subfamily.

The protein localises to the cell inner membrane. The enzyme catalyses GTP + H2O = GDP + phosphate + H(+). In terms of biological role, required for accurate and efficient protein synthesis under certain stress conditions. May act as a fidelity factor of the translation reaction, by catalyzing a one-codon backward translocation of tRNAs on improperly translocated ribosomes. Back-translocation proceeds from a post-translocation (POST) complex to a pre-translocation (PRE) complex, thus giving elongation factor G a second chance to translocate the tRNAs correctly. Binds to ribosomes in a GTP-dependent manner. This is Elongation factor 4 from Chlorobium phaeobacteroides (strain DSM 266 / SMG 266 / 2430).